We begin with the raw amino-acid sequence, 571 residues long: Proline--tRNA ligase (571 aa).

It belongs to the class-II aminoacyl-tRNA synthetase family. ProS type 1 subfamily. As to quaternary structure, homodimer.

The protein resides in the cytoplasm. The catalysed reaction is tRNA(Pro) + L-proline + ATP = L-prolyl-tRNA(Pro) + AMP + diphosphate. Catalyzes the attachment of proline to tRNA(Pro) in a two-step reaction: proline is first activated by ATP to form Pro-AMP and then transferred to the acceptor end of tRNA(Pro). As ProRS can inadvertently accommodate and process non-cognate amino acids such as alanine and cysteine, to avoid such errors it has two additional distinct editing activities against alanine. One activity is designated as 'pretransfer' editing and involves the tRNA(Pro)-independent hydrolysis of activated Ala-AMP. The other activity is designated 'posttransfer' editing and involves deacylation of mischarged Ala-tRNA(Pro). The misacylated Cys-tRNA(Pro) is not edited by ProRS. This Buchnera aphidicola subsp. Schizaphis graminum (strain Sg) protein is Proline--tRNA ligase.